Here is a 1331-residue protein sequence, read N- to C-terminus: Alpha,alpha-trehalose-phosphate synthase [UDP-forming] 1 (1331 aa).

Polar residues predominate over residues 1 to 13 (MTDTATGVHSNAN). Disordered regions lie at residues 1–50 (MTDT…DNDP), 71–118 (TGKE…SGQL), and 1312–1331 (PMDQEESSTLGASLGTSFGN). Basic and acidic residues predominate over residues 39–50 (DPFDRPKNDNDP). Residues 77 to 98 (LDESDDMTENEDHDEMANEDDG) show a composition bias toward acidic residues. Over residues 102–112 (NEKKVETRKMD) the composition is skewed to basic and acidic residues. Over residues 1318 to 1331 (SSTLGASLGTSFGN) the composition is skewed to polar residues.

It in the N-terminal section; belongs to the glycosyltransferase 20 family. The protein in the C-terminal section; belongs to the gob-1 trehalose phosphatase family.

The catalysed reaction is D-glucose 6-phosphate + UDP-alpha-D-glucose = alpha,alpha-trehalose 6-phosphate + UDP + H(+). Functionally, catalyzes the production of trehalose from glucose-6-phosphate and UDP-alpha-D-glucose in a 2 step process. The protein is Alpha,alpha-trehalose-phosphate synthase [UDP-forming] 1 (tps-1) of Caenorhabditis elegans.